The following is a 260-amino-acid chain: Ribosomal RNA small subunit methyltransferase J (260 aa).

S-adenosyl-L-methionine contacts are provided by residues 125–126 (ER) and D179.

Belongs to the methyltransferase superfamily. RsmJ family.

Its subcellular location is the cytoplasm. The catalysed reaction is guanosine(1516) in 16S rRNA + S-adenosyl-L-methionine = N(2)-methylguanosine(1516) in 16S rRNA + S-adenosyl-L-homocysteine + H(+). Functionally, specifically methylates the guanosine in position 1516 of 16S rRNA. The polypeptide is Ribosomal RNA small subunit methyltransferase J (Pseudomonas entomophila (strain L48)).